The chain runs to 257 residues: ATP synthase subunit a (257 aa).

The propeptide at 1–8 (MRHLDFVL) is removed in mature form. 7 consecutive transmembrane segments (helical) span residues 34 to 54 (LTNI…YSLL), 93 to 113 (FFPL…IGLV), 122 to 142 (HFIL…ILGF), 149 to 169 (FFSL…LVLI), 187 to 207 (ANIL…YNIM), 210 to 230 (GIIF…FSGL), and 231 to 251 (ELAI…SYIK).

Belongs to the ATPase A chain family. As to quaternary structure, F-type ATPases have 2 components, CF(1) - the catalytic core - and CF(0) - the membrane proton channel. CF(1) has five subunits: alpha(3), beta(3), gamma(1), delta(1), epsilon(1). CF(0) has three main subunits: a, b and c.

Its subcellular location is the mitochondrion inner membrane. In terms of biological role, mitochondrial membrane ATP synthase (F(1)F(0) ATP synthase or Complex V) produces ATP from ADP in the presence of a proton gradient across the membrane which is generated by electron transport complexes of the respiratory chain. F-type ATPases consist of two structural domains, F(1) - containing the extramembraneous catalytic core and F(0) - containing the membrane proton channel, linked together by a central stalk and a peripheral stalk. During catalysis, ATP synthesis in the catalytic domain of F(1) is coupled via a rotary mechanism of the central stalk subunits to proton translocation. Key component of the proton channel; it may play a direct role in the translocation of protons across the membrane. The chain is ATP synthase subunit a (atp6) from Penicillium chrysogenum (Penicillium notatum).